Here is a 720-residue protein sequence, read N- to C-terminus: Phosphate acetyltransferase (720 aa).

The phosphate acetyltransferase stretch occupies residues 389 to 720 (AFRHELVQKS…LEAKAAALAS (332 aa)).

The protein in the N-terminal section; belongs to the CobB/CobQ family. It in the C-terminal section; belongs to the phosphate acetyltransferase and butyryltransferase family. As to quaternary structure, homohexamer.

It is found in the cytoplasm. The catalysed reaction is acetyl-CoA + phosphate = acetyl phosphate + CoA. It participates in metabolic intermediate biosynthesis; acetyl-CoA biosynthesis; acetyl-CoA from acetate: step 2/2. Its function is as follows. Involved in acetate metabolism. This chain is Phosphate acetyltransferase (pta), found in Acinetobacter baylyi (strain ATCC 33305 / BD413 / ADP1).